The following is a 246-amino-acid chain: Ribonuclease 3 (246 aa).

Positions 18–147 (FQELQNKIGI…FIGALYLDQG (130 aa)) constitute an RNase III domain. Residue Glu60 participates in Mg(2+) binding. Asp64 is an active-site residue. Mg(2+)-binding residues include Asp133 and Glu136. Glu136 is an active-site residue. Residues 173-242 (DFKSQLQELV…AQMALETLRA (70 aa)) form the DRBM domain.

The protein belongs to the ribonuclease III family. In terms of assembly, homodimer. The cofactor is Mg(2+).

It is found in the cytoplasm. The catalysed reaction is Endonucleolytic cleavage to 5'-phosphomonoester.. Its function is as follows. Digests double-stranded RNA. Involved in the processing of primary rRNA transcript to yield the immediate precursors to the large and small rRNAs (23S and 16S). Processes some mRNAs, and tRNAs when they are encoded in the rRNA operon. Processes pre-crRNA and tracrRNA of type II CRISPR loci if present in the organism. This Geobacillus kaustophilus (strain HTA426) protein is Ribonuclease 3.